Reading from the N-terminus, the 365-residue chain is Peptide chain release factor 2 (365 aa).

The residue at position 251 (Gln-251) is an N5-methylglutamine.

It belongs to the prokaryotic/mitochondrial release factor family. Post-translationally, methylated by PrmC. Methylation increases the termination efficiency of RF2.

The protein resides in the cytoplasm. Its function is as follows. Peptide chain release factor 2 directs the termination of translation in response to the peptide chain termination codons UGA and UAA. In Campylobacter jejuni subsp. doylei (strain ATCC BAA-1458 / RM4099 / 269.97), this protein is Peptide chain release factor 2.